The chain runs to 520 residues: Nucleobase-ascorbate transporter 1 (520 aa).

The next 12 helical transmembrane spans lie at 36-56, 64-84, 86-106, 129-149, 150-170, 174-194, 213-233, 279-299, 362-382, 384-404, 415-435, and 453-473; these read YILM…AMGG, VIQT…LFGT, LPAV…IIND, ALIV…WGLF, SRFF…LGMF, FPQL…VIGL, FPIL…TASG, FAMM…YIAA, GFMI…SIPV, IYAA…LSFL, LMIT…FAQY, and AFLN…AVFM.

Belongs to the nucleobase:cation symporter-2 (NCS2) (TC 2.A.40) family. In terms of tissue distribution, expressed in cotyledons 4 days after imbibition (DAI). Expressed in the minor and major veins of cotyledons and leaves, in the shoot apex and pedicels. Expressed in the root meristems, root tips and lateral root primordia.

The protein localises to the membrane. The sequence is that of Nucleobase-ascorbate transporter 1 (NAT1) from Arabidopsis thaliana (Mouse-ear cress).